Here is a 282-residue protein sequence, read N- to C-terminus: Pantothenate synthetase (282 aa).

ATP is bound at residue 30-37 (MGYLHEGH). Histidine 37 serves as the catalytic Proton donor. Glutamine 61 contributes to the (R)-pantoate binding site. Residue glutamine 61 coordinates beta-alanine. Residue 147 to 150 (GMKD) coordinates ATP. Glutamine 153 is a (R)-pantoate binding site. ATP-binding positions include valine 176 and 184-187 (KSSR).

This sequence belongs to the pantothenate synthetase family. As to quaternary structure, homodimer.

It is found in the cytoplasm. The enzyme catalyses (R)-pantoate + beta-alanine + ATP = (R)-pantothenate + AMP + diphosphate + H(+). The protein operates within cofactor biosynthesis; (R)-pantothenate biosynthesis; (R)-pantothenate from (R)-pantoate and beta-alanine: step 1/1. Functionally, catalyzes the condensation of pantoate with beta-alanine in an ATP-dependent reaction via a pantoyl-adenylate intermediate. This is Pantothenate synthetase from Bacillus cereus (strain AH187).